The primary structure comprises 132 residues: Small ribosomal subunit protein uS8 (132 aa).

This sequence belongs to the universal ribosomal protein uS8 family. Part of the 30S ribosomal subunit. Contacts proteins S5 and S12.

In terms of biological role, one of the primary rRNA binding proteins, it binds directly to 16S rRNA central domain where it helps coordinate assembly of the platform of the 30S subunit. This is Small ribosomal subunit protein uS8 from Streptococcus agalactiae serotype Ia (strain ATCC 27591 / A909 / CDC SS700).